We begin with the raw amino-acid sequence, 84 residues long: Fulditoxin (84 aa).

The signal sequence occupies residues 1 to 21 (MKTLLLTLVVVTIVCLDLGNS). 4 disulfides stabilise this stretch: Cys-24–Cys-41, Cys-34–Cys-59, Cys-63–Cys-71, and Cys-72–Cys-77. His-50 provides a ligand contact to Zn(2+).

The protein belongs to the three-finger toxin family. Short-chain subfamily. As to quaternary structure, homodimer; non-covalently linked. Is able to form a tetramer of dimers in the presence of 2 zinc ions. Expressed by the venom gland.

It localises to the secreted. Postsynaptic neurotoxin that produces potent, and completely reversible, postsynaptic neuromuscular blockade, as well as broad spectrum inhibition of human muscle and neuronal nicotinic acetylcholine receptors (nAChRs). Inhibition is potent or moderate, depending on the receptor (alpha-1-beta-1-delta-epsilon/CHRNA1-CHRNB1-CHRND-CHRNE (IC(50)=2.56 uM), alpha-4-beta-2/CHRNA4-CHRNB2 (IC(50)=1.8 uM), alpha-7/CHRNA7 (IC(50)=7 uM), and alpha-3-beta-2/CHRNA3-CHRNB2 (IC(50)=12.6 uM)). Acts as a competitive antagonist of ACh. Binds to chicken muscle-type nicotinic acetylcholine receptor (AChR) with high potency compared with the cloned human receptor. Unlike short-chain alpha-3FTxs that only bind to muscle nAChRs, this toxin utilizes dimerization to expand its pharmacological targets to block neuronal nAChRs. This chain is Fulditoxin, found in Micrurus fulvius (Eastern coral snake).